Reading from the N-terminus, the 408-residue chain is Sex comb on midleg-like protein 4 (408 aa).

2 positions are modified to phosphoserine: Ser-55 and Ser-65. Positions 274-338 (AGGPATTTSG…TRRPSSRNPS (65 aa)) are disordered. Residues 278-287 (ATTTSGSRTN) are compositionally biased toward polar residues. Over residues 288 to 306 (PVPSGGSSSPGLRLPASSP) the composition is skewed to low complexity. Residues 340 to 406 (WTVEDVVRFV…CYHIDKLKQA (67 aa)) form the SAM domain.

Belongs to the SCM family.

The protein resides in the nucleus. Putative Polycomb group (PcG) protein. PcG proteins act by forming multiprotein complexes, which are required to maintain the transcriptionally repressive state of homeotic genes throughout development. The polypeptide is Sex comb on midleg-like protein 4 (Scml4) (Mus musculus (Mouse)).